The sequence spans 325 residues: NADH-quinone oxidoreductase subunit H (325 aa).

9 helical membrane passes run 11-31 (ILLT…CGAF), 50-69 (SRVG…KMFF), 81-101 (LIFT…FAIV), 114-134 (IGIL…LFAG), 154-174 (LSYE…AGSF), 186-206 (LWNI…GVAV), 237-257 (FFVG…TLFF), 265-285 (LPPF…FILV), and 304-324 (ICLP…LYHA).

The protein belongs to the complex I subunit 1 family. NDH-1 is composed of 13 different subunits. Subunits NuoA, H, J, K, L, M, N constitute the membrane sector of the complex.

Its subcellular location is the cell inner membrane. The enzyme catalyses a quinone + NADH + 5 H(+)(in) = a quinol + NAD(+) + 4 H(+)(out). NDH-1 shuttles electrons from NADH, via FMN and iron-sulfur (Fe-S) centers, to quinones in the respiratory chain. The immediate electron acceptor for the enzyme in this species is believed to be ubiquinone. Couples the redox reaction to proton translocation (for every two electrons transferred, four hydrogen ions are translocated across the cytoplasmic membrane), and thus conserves the redox energy in a proton gradient. This subunit may bind ubiquinone. The chain is NADH-quinone oxidoreductase subunit H from Edwardsiella ictaluri (strain 93-146).